An 87-amino-acid polypeptide reads, in one-letter code: Small ribosomal subunit protein bS16 (87 aa).

This sequence belongs to the bacterial ribosomal protein bS16 family.

The chain is Small ribosomal subunit protein bS16 from Fusobacterium nucleatum subsp. nucleatum (strain ATCC 25586 / DSM 15643 / BCRC 10681 / CIP 101130 / JCM 8532 / KCTC 2640 / LMG 13131 / VPI 4355).